A 600-amino-acid polypeptide reads, in one-letter code: Methylenetetrahydrofolate reductase 2 (600 aa).

Glu22 (proton donor/acceptor) is an active-site residue. NAD(+) is bound by residues Glu22 to Lys27 and Thr54 to Trp55. FAD-binding positions include Thr54–Trp55, His84, Arg114–Asp116, Tyr133–Ala134, Tyr156, Asp171, and Lys178. A substrate-binding site is contributed by Asp116. Residues Gln189 and Tyr282 each contribute to the substrate site.

It belongs to the methylenetetrahydrofolate reductase family. FAD is required as a cofactor.

It carries out the reaction (6S)-5-methyl-5,6,7,8-tetrahydrofolate + NADP(+) = (6R)-5,10-methylene-5,6,7,8-tetrahydrofolate + NADPH + H(+). Its pathway is one-carbon metabolism; tetrahydrofolate interconversion. The protein is Methylenetetrahydrofolate reductase 2 (MET13) of Saccharomyces cerevisiae (strain ATCC 204508 / S288c) (Baker's yeast).